We begin with the raw amino-acid sequence, 224 residues long: Cardosin-E (224 aa).

The region spanning 1–221 is the Peptidase A1 domain; the sequence is DSGSAIVALT…DYGNLLVGFA (221 aa). Asp-35 is an active-site residue. An intrachain disulfide couples Cys-125 to Cys-129. Residue Asp-134 is part of the active site.

This sequence belongs to the peptidase A1 family. In terms of assembly, heterodimer of a light chain and a heavy chain. An intermediate form is produced first, and undergoes proteolytic processing to remove the internal plant-specific insert (PSI) and the propeptide. Post-translationally, N-glycosylated. In terms of tissue distribution, pistils.

It is found in the microsome membrane. It localises to the protein storage vacuole. The protein localises to the secreted. The protein resides in the cell wall. Its subcellular location is the extracellular space. It is found in the extracellular matrix. With respect to regulation, inhibited by pepstatin. Its function is as follows. Aspartic protease with a high preference for bonds between hydrophobic residues. The sequence is that of Cardosin-E from Cynara cardunculus (Cardoon).